Consider the following 187-residue polypeptide: GTP cyclohydrolase 1 (187 aa).

3 residues coordinate Zn(2+): C78, H81, and C149.

The protein belongs to the GTP cyclohydrolase I family. As to quaternary structure, toroid-shaped homodecamer, composed of two pentamers of five dimers.

It carries out the reaction GTP + H2O = 7,8-dihydroneopterin 3'-triphosphate + formate + H(+). Its pathway is cofactor biosynthesis; 7,8-dihydroneopterin triphosphate biosynthesis; 7,8-dihydroneopterin triphosphate from GTP: step 1/1. The protein is GTP cyclohydrolase 1 of Wolinella succinogenes (strain ATCC 29543 / DSM 1740 / CCUG 13145 / JCM 31913 / LMG 7466 / NCTC 11488 / FDC 602W) (Vibrio succinogenes).